The sequence spans 181 residues: Adenine phosphoribosyltransferase (181 aa).

Belongs to the purine/pyrimidine phosphoribosyltransferase family. In terms of assembly, homodimer.

Its subcellular location is the cytoplasm. The enzyme catalyses AMP + diphosphate = 5-phospho-alpha-D-ribose 1-diphosphate + adenine. Its pathway is purine metabolism; AMP biosynthesis via salvage pathway; AMP from adenine: step 1/1. Its function is as follows. Catalyzes a salvage reaction resulting in the formation of AMP, that is energically less costly than de novo synthesis. This Chelativorans sp. (strain BNC1) protein is Adenine phosphoribosyltransferase.